The sequence spans 481 residues: PTS system N-acetylmuramic acid-specific EIIBC component (481 aa).

The 89-residue stretch at 1–89 (MAKITQTMMA…NALIESGDNV (89 aa)) folds into the PTS EIIB type-1 domain. Cysteine 28 (phosphocysteine intermediate; for EIIB activity) is an active-site residue. Positions 122-481 (SKFATIFTPL…FFGCKDVDLS (360 aa)) constitute a PTS EIIC type-1 domain. A run of 10 helical transmembrane segments spans residues 124–144 (FATIFTPLIPGFIAAGLLLGI), 165–185 (LVAYLKVFGKGLFAFLSILIG), 190–210 (QAFGGSGVNGAILASLFVLGY), 225–245 (FFGFAIDPRGNIIGVLLAAIL), 263–283 (MILTSVVTLLIMGAVTFLIIM), 307–327 (AAILAGLFLISVVFGIHQGFV), 342–362 (LFPILAMAGAGQVGASLALYA), 376–396 (GAIIPGILGIGEPLIYGVTLP), 406–426 (IGGAAGGFFIGLISYLGLPVG), and 448–468 (IFAGMAVFVGGLLISYTVGFA).

The protein localises to the cell inner membrane. The enzyme catalyses N-acetyl-beta-D-muramate(out) + N(pros)-phospho-L-histidyl-[protein] = N-acetyl-beta-D-muramate 6-phosphate(in) + L-histidyl-[protein]. The phosphoenolpyruvate-dependent sugar phosphotransferase system (sugar PTS), a major carbohydrate active transport system, catalyzes the phosphorylation of incoming sugar substrates concomitantly with their translocation across the cell membrane. This system is involved in N-acetylmuramic acid (MurNAc) transport, yielding cytoplasmic MurNAc-6-P. Is also able to take up anhydro-N-acetylmuramic acid (anhMurNAc), but cannot phosphorylate the carbon 6, probably because of the 1,6-anhydro ring. The protein is PTS system N-acetylmuramic acid-specific EIIBC component (murP) of Vibrio cholerae serotype O1 (strain ATCC 39315 / El Tor Inaba N16961).